The following is a 138-amino-acid chain: Large ribosomal subunit protein uL16 (138 aa).

The span at 1-13 shows a compositional bias: basic residues; it reads MLQPKRRKYRKEQ. The interval 1-24 is disordered; sequence MLQPKRRKYRKEQKGRNTGKATRG.

Belongs to the universal ribosomal protein uL16 family. As to quaternary structure, part of the 50S ribosomal subunit.

In terms of biological role, binds 23S rRNA and is also seen to make contacts with the A and possibly P site tRNAs. This Cupriavidus necator (strain ATCC 17699 / DSM 428 / KCTC 22496 / NCIMB 10442 / H16 / Stanier 337) (Ralstonia eutropha) protein is Large ribosomal subunit protein uL16.